The following is a 404-amino-acid chain: DNA replication and repair protein RecF (404 aa).

30–37 (GSNGQGKT) is an ATP binding site.

Belongs to the RecF family.

It localises to the cytoplasm. The RecF protein is involved in DNA metabolism; it is required for DNA replication and normal SOS inducibility. RecF binds preferentially to single-stranded, linear DNA. It also seems to bind ATP. This is DNA replication and repair protein RecF from Clavibacter michiganensis subsp. michiganensis (strain NCPPB 382).